A 277-amino-acid polypeptide reads, in one-letter code: Large ribosomal subunit protein uL2 (277 aa).

Positions 222–277 (GVAMNPVDHPHGGGEGRTSGGRHPVTPWGKPTKGKKTRSNKATDKFIMRSRHQRKK) are disordered.

It belongs to the universal ribosomal protein uL2 family. Part of the 50S ribosomal subunit. Forms a bridge to the 30S subunit in the 70S ribosome.

In terms of biological role, one of the primary rRNA binding proteins. Required for association of the 30S and 50S subunits to form the 70S ribosome, for tRNA binding and peptide bond formation. It has been suggested to have peptidyltransferase activity; this is somewhat controversial. Makes several contacts with the 16S rRNA in the 70S ribosome. In Brucella ovis (strain ATCC 25840 / 63/290 / NCTC 10512), this protein is Large ribosomal subunit protein uL2.